The sequence spans 106 residues: Large ribosomal subunit protein uL24 (106 aa).

The protein belongs to the universal ribosomal protein uL24 family. In terms of assembly, part of the 50S ribosomal subunit.

Its function is as follows. One of two assembly initiator proteins, it binds directly to the 5'-end of the 23S rRNA, where it nucleates assembly of the 50S subunit. One of the proteins that surrounds the polypeptide exit tunnel on the outside of the subunit. This chain is Large ribosomal subunit protein uL24, found in Blochmanniella floridana.